The sequence spans 458 residues: uncharacterized protein (458 aa).

A compositionally biased stretch (basic and acidic residues) spans M1 to A10. Residues M1–S20 are disordered. A TRAM domain is found at V23–E84. [4Fe-4S] cluster-binding residues include C97, C105, C108, and C193. The S-adenosyl-L-methionine site is built by Q287, Y316, E340, and D384. Catalysis depends on C411, which acts as the Nucleophile.

It belongs to the class I-like SAM-binding methyltransferase superfamily. RNA M5U methyltransferase family.

This is an uncharacterized protein from Streptomyces coelicolor (strain ATCC BAA-471 / A3(2) / M145).